We begin with the raw amino-acid sequence, 102 residues long: RNA-binding protein Hfq (102 aa).

The Sm domain maps to 9-68 (DPFLNALRRERVPVSIYLVNGIKLQGQIESFDQFVILLKNTVSQMVYKHAISTVVPSRPV). A disordered region spans residues 63-102 (VPSRPVSHHSNNAGGGTSSNYHHGSSPQNTSAQQDSEETE). The segment covering 70–96 (HHSNNAGGGTSSNYHHGSSPQNTSAQQ) has biased composition (polar residues).

Belongs to the Hfq family. Homohexamer.

Its function is as follows. RNA chaperone that binds small regulatory RNA (sRNAs) and mRNAs to facilitate mRNA translational regulation in response to envelope stress, environmental stress and changes in metabolite concentrations. Also binds with high specificity to tRNAs. This chain is RNA-binding protein Hfq, found in Shigella dysenteriae serotype 1 (strain Sd197).